A 419-amino-acid chain; its full sequence is Murein hydrolase activator EnvC (419 aa).

A signal peptide spans 1-34; the sequence is MTRAVKPRRFAIRPIIYASVLSAGVLLCAFSAHA. Coiled-coil stretches lie at residues 35–124 and 155–271; these read DERD…LDAA and LNQA…ATRK. Residues 252-270 show a composition bias toward basic and acidic residues; sequence EREAREAQAVRDRQKEATR. The segment at 252–290 is disordered; it reads EREAREAQAVRDRQKEATRKGTTYKPTESEKSLMSRTGG.

It belongs to the peptidase M23B family.

It localises to the periplasm. Functionally, activator of the cell wall hydrolases AmiA and AmiB. Required for septal murein cleavage and daughter cell separation during cell division. In vitro, exhibits weak endoproteolytic activity on beta-casein. The protein is Murein hydrolase activator EnvC (envC) of Escherichia coli (strain K12).